The primary structure comprises 323 residues: Methionyl-tRNA formyltransferase (323 aa).

Position 113–116 (113–116) interacts with (6S)-5,6,7,8-tetrahydrofolate; that stretch reads SLLP.

This sequence belongs to the Fmt family.

The enzyme catalyses L-methionyl-tRNA(fMet) + (6R)-10-formyltetrahydrofolate = N-formyl-L-methionyl-tRNA(fMet) + (6S)-5,6,7,8-tetrahydrofolate + H(+). Functionally, attaches a formyl group to the free amino group of methionyl-tRNA(fMet). The formyl group appears to play a dual role in the initiator identity of N-formylmethionyl-tRNA by promoting its recognition by IF2 and preventing the misappropriation of this tRNA by the elongation apparatus. This Porphyromonas gingivalis (strain ATCC 33277 / DSM 20709 / CIP 103683 / JCM 12257 / NCTC 11834 / 2561) protein is Methionyl-tRNA formyltransferase.